We begin with the raw amino-acid sequence, 122 residues long: Large ribosomal subunit protein uL14c (122 aa).

It belongs to the universal ribosomal protein uL14 family. Part of the 50S ribosomal subunit.

Its subcellular location is the plastid. The protein localises to the chloroplast. Its function is as follows. Binds to 23S rRNA. The sequence is that of Large ribosomal subunit protein uL14c from Carica papaya (Papaya).